The primary structure comprises 388 residues: Cobalt-precorrin-5B C(1)-methyltransferase (388 aa).

This sequence belongs to the CbiD family.

It carries out the reaction Co-precorrin-5B + S-adenosyl-L-methionine = Co-precorrin-6A + S-adenosyl-L-homocysteine. The protein operates within cofactor biosynthesis; adenosylcobalamin biosynthesis; cob(II)yrinate a,c-diamide from sirohydrochlorin (anaerobic route): step 6/10. In terms of biological role, catalyzes the methylation of C-1 in cobalt-precorrin-5B to form cobalt-precorrin-6A. This is Cobalt-precorrin-5B C(1)-methyltransferase from Rubrobacter xylanophilus (strain DSM 9941 / JCM 11954 / NBRC 16129 / PRD-1).